The primary structure comprises 330 residues: tRNA U34 carboxymethyltransferase (330 aa).

Residues K91, W105, K110, G130, 152 to 154 (DPS), 181 to 182 (IE), M196, Y200, and R315 each bind carboxy-S-adenosyl-L-methionine.

It belongs to the class I-like SAM-binding methyltransferase superfamily. CmoB family. As to quaternary structure, homotetramer.

It carries out the reaction carboxy-S-adenosyl-L-methionine + 5-hydroxyuridine(34) in tRNA = 5-carboxymethoxyuridine(34) in tRNA + S-adenosyl-L-homocysteine + H(+). Functionally, catalyzes carboxymethyl transfer from carboxy-S-adenosyl-L-methionine (Cx-SAM) to 5-hydroxyuridine (ho5U) to form 5-carboxymethoxyuridine (cmo5U) at position 34 in tRNAs. The protein is tRNA U34 carboxymethyltransferase of Shewanella halifaxensis (strain HAW-EB4).